The following is a 151-amino-acid chain: Small ribosomal subunit protein bS6 (151 aa).

Residues 98–151 form a disordered region; sequence EESPIQKAEKENRERKNRAERRAAEAAAATETEKSESEESAEEETSTDTTGEEE. Over residues 135–151 the composition is skewed to acidic residues; the sequence is EESAEEETSTDTTGEEE.

This sequence belongs to the bacterial ribosomal protein bS6 family.

Binds together with bS18 to 16S ribosomal RNA. The polypeptide is Small ribosomal subunit protein bS6 (Teredinibacter turnerae (strain ATCC 39867 / T7901)).